Here is a 1207-residue protein sequence, read N- to C-terminus: DNA-directed RNA polymerase subunit beta' (1207 aa).

Residues C60, C62, C75, and C78 each coordinate Zn(2+). The Mg(2+) site is built by D450, D452, and D454. Zn(2+) is bound by residues C818, C892, C899, and C902.

It belongs to the RNA polymerase beta' chain family. The RNAP catalytic core consists of 2 alpha, 1 beta, 1 beta' and 1 omega subunit. When a sigma factor is associated with the core the holoenzyme is formed, which can initiate transcription. It depends on Mg(2+) as a cofactor. The cofactor is Zn(2+).

It catalyses the reaction RNA(n) + a ribonucleoside 5'-triphosphate = RNA(n+1) + diphosphate. Functionally, DNA-dependent RNA polymerase catalyzes the transcription of DNA into RNA using the four ribonucleoside triphosphates as substrates. This chain is DNA-directed RNA polymerase subunit beta', found in Lactococcus lactis subsp. cremoris (strain SK11).